Reading from the N-terminus, the 194-residue chain is Adenylate kinase (194 aa).

An ATP-binding site is contributed by 10–15 (GAGKGT). The tract at residues 30–59 (STGDMLRAAVAAGTPVGLKAKAVMESGGLV) is NMP. Residues threonine 31, arginine 36, 57-59 (GLV), 85-88 (GFPR), and glutamine 92 contribute to the AMP site. The LID stretch occupies residues 126–142 (NRAAEAKAKGEPVRKDD). Arginine 127 provides a ligand contact to ATP. AMP is bound by residues arginine 139 and arginine 150. Alanine 178 is a binding site for ATP.

Belongs to the adenylate kinase family. As to quaternary structure, monomer.

The protein resides in the cytoplasm. It carries out the reaction AMP + ATP = 2 ADP. The protein operates within purine metabolism; AMP biosynthesis via salvage pathway; AMP from ADP: step 1/1. In terms of biological role, catalyzes the reversible transfer of the terminal phosphate group between ATP and AMP. Plays an important role in cellular energy homeostasis and in adenine nucleotide metabolism. The protein is Adenylate kinase of Azorhizobium caulinodans (strain ATCC 43989 / DSM 5975 / JCM 20966 / LMG 6465 / NBRC 14845 / NCIMB 13405 / ORS 571).